Consider the following 252-residue polypeptide: Probable ABC transporter ATP-binding protein p29 (252 aa).

The region spanning 8 to 252 (LEIKNLTFKN…NILDQVFKND (245 aa)) is the ABC transporter domain. Residue 42–49 (GSSGQGKS) participates in ATP binding.

The protein belongs to the ABC transporter superfamily.

Functionally, part of a high-affinity transport system. This is Probable ABC transporter ATP-binding protein p29 from Mesomycoplasma hyorhinis (Mycoplasma hyorhinis).